Reading from the N-terminus, the 229-residue chain is Calcyclin-binding protein (229 aa).

Alanine 2 is subject to N-acetylalanine. The segment at 2–81 is interaction with SIAH1; sequence ASALEELQKD…YTVKISNYGW (80 aa). Phosphoserine is present on serine 3. Lysine 10 and lysine 21 each carry N6-acetyllysine. Serine 36 is subject to Phosphoserine. A disordered region spans residues 38–59; it reads IETELRNKMQQKSQKKPEFDNE. Residues 74–168 form the CS domain; sequence VKISNYGWDQ…AENTRWDYLT (95 aa). The segment at 74 to 229 is interaction with SKP1; it reads VKISNYGWDQ…EKQAREDTEF (156 aa). 2 positions are modified to N6-acetyllysine: lysine 86 and lysine 119. The interval 155 to 229 is interaction with S100A6; the sequence is CRKKAENTRW…EKQAREDTEF (75 aa). The region spanning 169-229 is the SGS domain; it reads QVEKECKEKE…EKQAREDTEF (61 aa).

As to quaternary structure, component of some large E3 complex at least composed of UBE2D1, SIAH1, CACYBP/SIP, SKP1, APC and TBL1X. Interacts directly with SIAH1, SIAH2 and SKP1. Interacts with protein of the S100 family S100A1, S100A6, S100B, S100P and S100A12 in a calcium-dependent manner. Post-translationally, phosphorylated on serine residues. Phosphorylated upon induction by RA or at high calcium concentrations.

It is found in the nucleus. The protein resides in the cytoplasm. Functionally, may be involved in calcium-dependent ubiquitination and subsequent proteasomal degradation of target proteins. Probably serves as a molecular bridge in ubiquitin E3 complexes. Participates in the ubiquitin-mediated degradation of beta-catenin (CTNNB1). The protein is Calcyclin-binding protein (Cacybp) of Rattus norvegicus (Rat).